A 377-amino-acid polypeptide reads, in one-letter code: S-adenosylmethionine decarboxylase proenzyme 2 (377 aa).

Catalysis depends on residues glutamate 24 and glutamate 27. Serine 84 (schiff-base intermediate with substrate; via pyruvic acid) is an active-site residue. A Pyruvic acid (Ser); by autocatalysis modification is found at serine 84. Cysteine 98 serves as the catalytic Proton donor; for catalytic activity. Residues serine 246 and histidine 259 each act as proton acceptor; for processing activity in the active site.

Belongs to the eukaryotic AdoMetDC family. Pyruvate serves as cofactor. In terms of processing, is synthesized initially as an inactive proenzyme. Formation of the active enzyme involves a self-maturation process in which the active site pyruvoyl group is generated from an internal serine residue via an autocatalytic post-translational modification. Two non-identical subunits are generated from the proenzyme in this reaction, and the pyruvate is formed at the N-terminus of the alpha chain, which is derived from the carboxyl end of the proenzyme. The post-translation cleavage follows an unusual pathway, termed non-hydrolytic serinolysis, in which the side chain hydroxyl group of the serine supplies its oxygen atom to form the C-terminus of the beta chain, while the remainder of the serine residue undergoes an oxidative deamination to produce ammonia and the pyruvoyl group blocking the N-terminus of the alpha chain.

It carries out the reaction S-adenosyl-L-methionine + H(+) = S-adenosyl 3-(methylsulfanyl)propylamine + CO2. Its pathway is amine and polyamine biosynthesis; S-adenosylmethioninamine biosynthesis; S-adenosylmethioninamine from S-adenosyl-L-methionine: step 1/1. This chain is S-adenosylmethionine decarboxylase proenzyme 2 (SAMDC2), found in Dianthus caryophyllus (Carnation).